A 710-amino-acid polypeptide reads, in one-letter code: DNA ligase (710 aa).

Residues 1–36 (MTSSSPRHADPDENPYVEAPPTDFEPVGALSEDEAT) form a disordered region. NAD(+) contacts are provided by residues 63 to 67 (DETYD), 111 to 112 (SI), and Glu-147. The active-site N6-AMP-lysine intermediate is the Lys-149. Residues Arg-170, Glu-206, and Lys-353 each contribute to the NAD(+) site. Residues Cys-444, Cys-447, Cys-460, and Cys-466 each contribute to the Zn(2+) site. In terms of domain architecture, BRCT spans 623–710 (ETGDALDGLT…ERGVAWPPEE (88 aa)). The segment at 657-689 (ATSSVSGNTDYLVAGESPGRSKRDDADAEGVPV) is disordered.

Belongs to the NAD-dependent DNA ligase family. LigA subfamily. The cofactor is Mg(2+). It depends on Mn(2+) as a cofactor.

The catalysed reaction is NAD(+) + (deoxyribonucleotide)n-3'-hydroxyl + 5'-phospho-(deoxyribonucleotide)m = (deoxyribonucleotide)n+m + AMP + beta-nicotinamide D-nucleotide.. Its function is as follows. DNA ligase that catalyzes the formation of phosphodiester linkages between 5'-phosphoryl and 3'-hydroxyl groups in double-stranded DNA using NAD as a coenzyme and as the energy source for the reaction. It is essential for DNA replication and repair of damaged DNA. The chain is DNA ligase from Halorubrum lacusprofundi (strain ATCC 49239 / DSM 5036 / JCM 8891 / ACAM 34).